The primary structure comprises 425 residues: Stabilizer of axonemal microtubules 4 (425 aa).

Disordered regions lie at residues 93-126, 203-225, and 316-335; these read PLEV…PPTK, EGSG…SQAL, and KEPT…PCDP. Residues 207 to 222 are compositionally biased toward polar residues; the sequence is FTKQSHQSPIVFQPPS.

Microtubule inner protein component of sperm flagellar doublet microtubules. Interacts with PPP1CA.

It localises to the cell projection. The protein resides in the cilium. The protein localises to the cytoplasm. Its subcellular location is the cytoskeleton. It is found in the flagellum axoneme. This Homo sapiens (Human) protein is Stabilizer of axonemal microtubules 4.